The primary structure comprises 272 residues: Ribosomal RNA small subunit methyltransferase A (272 aa).

S-adenosyl-L-methionine is bound by residues Asn18, Leu20, Gly45, Glu66, Asp91, and Asn113.

This sequence belongs to the class I-like SAM-binding methyltransferase superfamily. rRNA adenine N(6)-methyltransferase family. RsmA subfamily.

It localises to the cytoplasm. The enzyme catalyses adenosine(1518)/adenosine(1519) in 16S rRNA + 4 S-adenosyl-L-methionine = N(6)-dimethyladenosine(1518)/N(6)-dimethyladenosine(1519) in 16S rRNA + 4 S-adenosyl-L-homocysteine + 4 H(+). Its function is as follows. Specifically dimethylates two adjacent adenosines (A1518 and A1519) in the loop of a conserved hairpin near the 3'-end of 16S rRNA in the 30S particle. May play a critical role in biogenesis of 30S subunits. This Pectobacterium atrosepticum (strain SCRI 1043 / ATCC BAA-672) (Erwinia carotovora subsp. atroseptica) protein is Ribosomal RNA small subunit methyltransferase A.